Consider the following 465-residue polypeptide: 3-isopropylmalate dehydratase large subunit (465 aa).

The [4Fe-4S] cluster site is built by Cys-347, Cys-407, and Cys-410.

Belongs to the aconitase/IPM isomerase family. LeuC type 1 subfamily. Heterodimer of LeuC and LeuD. The cofactor is [4Fe-4S] cluster.

It carries out the reaction (2R,3S)-3-isopropylmalate = (2S)-2-isopropylmalate. It functions in the pathway amino-acid biosynthesis; L-leucine biosynthesis; L-leucine from 3-methyl-2-oxobutanoate: step 2/4. Functionally, catalyzes the isomerization between 2-isopropylmalate and 3-isopropylmalate, via the formation of 2-isopropylmaleate. In Tolumonas auensis (strain DSM 9187 / NBRC 110442 / TA 4), this protein is 3-isopropylmalate dehydratase large subunit.